The following is a 265-amino-acid chain: NAD kinase 1 (265 aa).

The active-site Proton acceptor is Asp45. Residues 45-46, His50, 122-123, Arg148, Asp150, and Ala185 each bind NAD(+); these read DG and NE.

This sequence belongs to the NAD kinase family. The cofactor is a divalent metal cation.

It is found in the cytoplasm. The enzyme catalyses NAD(+) + ATP = ADP + NADP(+) + H(+). Functionally, involved in the regulation of the intracellular balance of NAD and NADP, and is a key enzyme in the biosynthesis of NADP. Catalyzes specifically the phosphorylation on 2'-hydroxyl of the adenosine moiety of NAD to yield NADP. The protein is NAD kinase 1 of Halalkalibacterium halodurans (strain ATCC BAA-125 / DSM 18197 / FERM 7344 / JCM 9153 / C-125) (Bacillus halodurans).